We begin with the raw amino-acid sequence, 77 residues long: Translational regulator CsrA (77 aa).

Belongs to the CsrA/RsmA family. In terms of assembly, homodimer; the beta-strands of each monomer intercalate to form a hydrophobic core, while the alpha-helices form wings that extend away from the core.

It localises to the cytoplasm. A translational regulator that binds mRNA to regulate translation initiation and/or mRNA stability. Usually binds in the 5'-UTR at or near the Shine-Dalgarno sequence preventing ribosome-binding, thus repressing translation. Its main target seems to be the major flagellin gene, while its function is anatagonized by FliW. The polypeptide is Translational regulator CsrA (Pseudarthrobacter chlorophenolicus (strain ATCC 700700 / DSM 12829 / CIP 107037 / JCM 12360 / KCTC 9906 / NCIMB 13794 / A6) (Arthrobacter chlorophenolicus)).